We begin with the raw amino-acid sequence, 1258 residues long: uncharacterized protein (1258 aa).

A WD 1 repeat occupies Glu-55 to Glu-93. The segment covering Gly-112–Lys-128 has biased composition (basic and acidic residues). The interval Gly-112–Asp-138 is disordered. WD repeat units follow at residues Glu-640–Ile-679, Gly-682–Thr-721, Gly-724–Thr-763, Gly-766–Lys-807, His-809–Ile-849, Gly-850–Thr-889, Gly-892–Ala-931, Gly-934–Glu-975, Gly-976–Leu-1017, His-1019–Ser-1059, Glu-1060–Arg-1101, His-1103–Thr-1143, Gly-1144–Ile-1183, and Gly-1186–Arg-1227.

This is an uncharacterized protein from Nostoc sp. (strain PCC 7120 / SAG 25.82 / UTEX 2576).